A 193-amino-acid polypeptide reads, in one-letter code: Phosphatidylglycerophosphatase and protein-tyrosine phosphatase 1 (193 aa).

The N-terminal 31 residues, 1-31 (MAASAWLEAGLARVLFYPTLLYTVFRGRVGG), are a transit peptide targeting the mitochondrion. One can recognise a Tyrosine-protein phosphatase domain in the interval 37-188 (WYHRIDHTVL…LKEFHKEIAA (152 aa)). Lys-85 is subject to N6-succinyllysine. Catalysis depends on Cys-132, which acts as the Phosphocysteine intermediate.

This sequence belongs to the protein-tyrosine phosphatase family. Non-receptor class dual specificity subfamily. In terms of assembly, interacts with STYXL1; the interaction inhibits PTPMT1 catalytic activity. As to expression, expressed in liver and in pancreatic beta cells.

The protein resides in the mitochondrion inner membrane. It carries out the reaction O-phospho-L-tyrosyl-[protein] + H2O = L-tyrosyl-[protein] + phosphate. The catalysed reaction is O-phospho-L-seryl-[protein] + H2O = L-seryl-[protein] + phosphate. It catalyses the reaction O-phospho-L-threonyl-[protein] + H2O = L-threonyl-[protein] + phosphate. The enzyme catalyses a 1,2-diacyl-sn-glycero-3-phospho-(1'-sn-glycero-3'-phosphate) + H2O = a 1,2-diacyl-sn-glycero-3-phospho-(1'-sn-glycerol) + phosphate. It carries out the reaction 1,2-di-(9Z-octadecenoyl)-sn-glycero-3-phospho-(1'-sn-glycerol-3'-phosphate) + H2O = 1,2-di-(9Z-octadecenoyl)-sn-glycero-3-phospho-(1'-sn-glycerol) + phosphate. The catalysed reaction is 1,2-dioctanoyl-sn-glycero-3-phospho-(1D-myo-inositol-5-phosphate) + H2O = 1,2-dioctanoyl-sn-glycero-3-phospho-(1D-myo-inositol) + phosphate. It catalyses the reaction a 1-acyl-2-hexanoyl-sn-glycero-3-phospho-(1D-myo-inositol-5-phosphate) + H2O = a 1-acyl-2-hexanoyl-sn-glycero-3-phospho-(1D-myo-inositol) + phosphate. The enzyme catalyses 1,2-dibutyryl-sn-glycero-3-phospho-(1D-myo-inositol-5-phosphate) + H2O = 1,2-dibutyryl-sn-glycero-3-phospho-(1D-myo-inositol) + phosphate. Its pathway is phospholipid metabolism; phosphatidylglycerol biosynthesis; phosphatidylglycerol from CDP-diacylglycerol: step 2/2. In terms of biological role, lipid phosphatase which dephosphorylates phosphatidylglycerophosphate (PGP) to phosphatidylglycerol (PG). PGP is an essential intermediate in the biosynthetic pathway of cardiolipin, a mitochondrial-specific phospholipid regulating the membrane integrity and activities of the organelle. Has also been shown to display phosphatase activity toward phosphoprotein substrates, specifically mediates dephosphorylation of mitochondrial proteins, thereby playing an essential role in ATP production. Has probably a preference for proteins phosphorylated on Ser and/or Thr residues compared to proteins phosphorylated on Tyr residues. Probably involved in regulation of insulin secretion in pancreatic beta cells. May prevent intrinsic apoptosis, probably by regulating mitochondrial membrane integrity. The polypeptide is Phosphatidylglycerophosphatase and protein-tyrosine phosphatase 1 (Rattus norvegicus (Rat)).